We begin with the raw amino-acid sequence, 917 residues long: Protein translocase subunit SecA (917 aa).

Residues Q87, 105–109 (GEGKT), and D516 contribute to the ATP site. Positions 901, 903, 912, and 913 each coordinate Zn(2+).

Belongs to the SecA family. As to quaternary structure, monomer and homodimer. Part of the essential Sec protein translocation apparatus which comprises SecA, SecYEG and auxiliary proteins SecDF-YajC and YidC. Zn(2+) serves as cofactor.

It localises to the cell inner membrane. The protein localises to the cytoplasm. The enzyme catalyses ATP + H2O + cellular proteinSide 1 = ADP + phosphate + cellular proteinSide 2.. In terms of biological role, part of the Sec protein translocase complex. Interacts with the SecYEG preprotein conducting channel. Has a central role in coupling the hydrolysis of ATP to the transfer of proteins into and across the cell membrane, serving both as a receptor for the preprotein-SecB complex and as an ATP-driven molecular motor driving the stepwise translocation of polypeptide chains across the membrane. The protein is Protein translocase subunit SecA of Acidovorax ebreus (strain TPSY) (Diaphorobacter sp. (strain TPSY)).